Consider the following 237-residue polypeptide: 1-(5-phosphoribosyl)-5-[(5-phosphoribosylamino)methylideneamino] imidazole-4-carboxamide isomerase (237 aa).

The Proton acceptor role is filled by D8. D127 acts as the Proton donor in catalysis.

The protein belongs to the HisA/HisF family.

Its subcellular location is the cytoplasm. It catalyses the reaction 1-(5-phospho-beta-D-ribosyl)-5-[(5-phospho-beta-D-ribosylamino)methylideneamino]imidazole-4-carboxamide = 5-[(5-phospho-1-deoxy-D-ribulos-1-ylimino)methylamino]-1-(5-phospho-beta-D-ribosyl)imidazole-4-carboxamide. It participates in amino-acid biosynthesis; L-histidine biosynthesis; L-histidine from 5-phospho-alpha-D-ribose 1-diphosphate: step 4/9. The polypeptide is 1-(5-phosphoribosyl)-5-[(5-phosphoribosylamino)methylideneamino] imidazole-4-carboxamide isomerase (Sulfurovum sp. (strain NBC37-1)).